The chain runs to 88 residues: Translation initiation factor IF-1 3 (88 aa).

Positions 1–72 (MAKEELLELD…TKGCINFRHK (72 aa)) constitute an S1-like domain.

Belongs to the IF-1 family. Component of the 30S ribosomal translation pre-initiation complex which assembles on the 30S ribosome in the order IF-2 and IF-3, IF-1 and N-formylmethionyl-tRNA(fMet); mRNA recruitment can occur at any time during PIC assembly.

It is found in the cytoplasm. In terms of biological role, one of the essential components for the initiation of protein synthesis. Stabilizes the binding of IF-2 and IF-3 on the 30S subunit to which N-formylmethionyl-tRNA(fMet) subsequently binds. Helps modulate mRNA selection, yielding the 30S pre-initiation complex (PIC). Upon addition of the 50S ribosomal subunit IF-1, IF-2 and IF-3 are released leaving the mature 70S translation initiation complex. The protein is Translation initiation factor IF-1 3 of Burkholderia orbicola (strain AU 1054).